Reading from the N-terminus, the 542-residue chain is Calcium/calmodulin-dependent protein kinase type II subunit beta (542 aa).

Residues 14-272 (YQLYEDIGKG…AHEALKHPWV (259 aa)) enclose the Protein kinase domain. Tyr17 carries the post-translational modification Phosphotyrosine. Residues 20 to 28 (IGKGAFSVV) and Lys43 each bind ATP. Catalysis depends on Asp136, which acts as the Proton acceptor. Residues 283–292 (HRQETVECLK) form an autoinhibitory domain region. Position 287 is a phosphothreonine; by autocatalysis (Thr287). A calmodulin-binding region spans residues 291 to 301 (LKKFNARRKLK). 2 positions are modified to phosphothreonine; by autocatalysis: Thr306 and Thr307. The segment at 349 to 407 (ADGVKPQTNSTKNSAAATSPKGTLPPAALEPQTTVIHNPVDGIKESSDSTHTTIEDEDT) is disordered. Positions 354 to 369 (PQTNSTKNSAAATSPK) are enriched in polar residues. Phosphoserine occurs at positions 367, 394, and 397. Phosphothreonine is present on residues Thr400 and Thr401.

This sequence belongs to the protein kinase superfamily. CAMK Ser/Thr protein kinase family. CaMK subfamily. In terms of assembly, CAMK2 is composed of 4 different chains: alpha (CAMK2A), beta (CAMK2B), gamma (CAMK2G), and delta (CAMK2D). The different isoforms assemble into homo- or heteromultimeric holoenzymes composed of 12 subunits with two hexameric rings stacked one on top of the other. Interacts with SYNGAP1, CAMK2N2 and MPDZ. Interacts with FOXO3. Interacts (when in a kinase inactive state not associated with calmodulin) with ARC; leading to target ARC to inactive synapses. Interacts with CAMK2N1; this interaction requires CAMK2B activation by Ca(2+). In terms of processing, autophosphorylation of Thr-287 following activation by Ca(2+)/calmodulin. Phosphorylation of Thr-287 locks the kinase into an activated state.

The protein localises to the cytoplasm. Its subcellular location is the cytoskeleton. It localises to the microtubule organizing center. The protein resides in the centrosome. It is found in the sarcoplasmic reticulum membrane. The protein localises to the synapse. It carries out the reaction L-seryl-[protein] + ATP = O-phospho-L-seryl-[protein] + ADP + H(+). The enzyme catalyses L-threonyl-[protein] + ATP = O-phospho-L-threonyl-[protein] + ADP + H(+). Activated by Ca(2+)/calmodulin. Binding of calmodulin results in conformational change that relieves intrasteric autoinhibition and allows autophosphorylation of Thr-287 which turns the kinase in a constitutively active form and confers to the kinase a Ca(2+)-independent activity. Functionally, calcium/calmodulin-dependent protein kinase that functions autonomously after Ca(2+)/calmodulin-binding and autophosphorylation, and is involved in dendritic spine and synapse formation, neuronal plasticity and regulation of sarcoplasmic reticulum Ca(2+) transport in skeletal muscle. In neurons, plays an essential structural role in the reorganization of the actin cytoskeleton during plasticity by binding and bundling actin filaments in a kinase-independent manner. This structural function is required for correct targeting of CaMK2A, which acts downstream of NMDAR to promote dendritic spine and synapse formation and maintain synaptic plasticity which enables long-term potentiation (LTP) and hippocampus-dependent learning. In developing hippocampal neurons, promotes arborization of the dendritic tree and in mature neurons, promotes dendritic remodeling. Also regulates the migration of developing neurons. Participates in the modulation of skeletal muscle function in response to exercise. In slow-twitch muscles, is involved in regulation of sarcoplasmic reticulum (SR) Ca(2+) transport and in fast-twitch muscle participates in the control of Ca(2+) release from the SR through phosphorylation of triadin, a ryanodine receptor-coupling factor, and phospholamban (PLN/PLB), an endogenous inhibitor of SERCA2A/ATP2A2. In response to interferon-gamma (IFN-gamma) stimulation, catalyzes phosphorylation of STAT1, stimulating the JAK-STAT signaling pathway. Phosphorylates reticulophagy regulator RETREG1 at 'Ser-147' under endoplasmic reticulum stress conditions which enhances RETREG1 oligomerization and its membrane scission and reticulophagy activity. The protein is Calcium/calmodulin-dependent protein kinase type II subunit beta (CAMK2B) of Bos taurus (Bovine).